The sequence spans 216 residues: N-glycosylase/DNA lyase (216 aa).

3 residues coordinate 8-oxoguanine: Gln27, Ser48, and Trp59. The tract at residues 106-170 (EHYYENMVAL…LDYRLKKINP (65 aa)) is helix-hairpin-helix. Catalysis depends on Lys130, which acts as the Schiff-base intermediate with DNA. 2 residues coordinate 8-oxoguanine: Phe134 and Pro160. The active site involves Asp162. 8-oxoguanine contacts are provided by Asp190 and Trp194.

The protein belongs to the archaeal N-glycosylase/DNA lyase (AGOG) family.

It carries out the reaction 2'-deoxyribonucleotide-(2'-deoxyribose 5'-phosphate)-2'-deoxyribonucleotide-DNA = a 3'-end 2'-deoxyribonucleotide-(2,3-dehydro-2,3-deoxyribose 5'-phosphate)-DNA + a 5'-end 5'-phospho-2'-deoxyribonucleoside-DNA + H(+). In terms of biological role, DNA repair enzyme that is part of the base excision repair (BER) pathway; protects from oxidative damage by removing the major product of DNA oxidation, 8-oxoguanine (GO), from single- and double-stranded DNA substrates. This is N-glycosylase/DNA lyase from Nanoarchaeum equitans (strain Kin4-M).